Reading from the N-terminus, the 666-residue chain is ATP-dependent zinc metalloprotease FtsH (666 aa).

The Cytoplasmic segment spans residues 1-6 (MKSETG). The chain crosses the membrane as a helical span at residues 7–27 (YMGFVVVLVFMVLLALQLATL). At 28–116 (SAPATQIAYS…TRYRGADDDT (89 aa)) the chain is on the periplasmic side. The chain crosses the membrane as a helical span at residues 117–137 (WIGTLASWIVPIAVFALVWNL). The Cytoplasmic segment spans residues 138-666 (MLRRPRGGLQ…ADNADHSVPQ (529 aa)). ATP is bound at residue 210–217 (GAPGTGKT). Residue His432 participates in Zn(2+) binding. Glu433 is a catalytic residue. Zn(2+) contacts are provided by His436 and Asp509. The segment at 612 to 666 (NDEPTPEPGARDPGGDAAKRSGIGAAPAKPPAEVGSAELRDPARKADNADHSVPQ) is disordered. Basic and acidic residues-rich tracts occupy residues 620-630 (GARDPGGDAAK) and 649-666 (ELRDPARKADNADHSVPQ).

The protein in the central section; belongs to the AAA ATPase family. This sequence in the C-terminal section; belongs to the peptidase M41 family. As to quaternary structure, homohexamer. Zn(2+) serves as cofactor.

The protein localises to the cell inner membrane. Acts as a processive, ATP-dependent zinc metallopeptidase for both cytoplasmic and membrane proteins. Plays a role in the quality control of integral membrane proteins. The polypeptide is ATP-dependent zinc metalloprotease FtsH (Burkholderia pseudomallei (strain 1710b)).